The following is a 107-amino-acid chain: Putative double-stranded DNA mimic protein ETA_15890 (107 aa).

The protein belongs to the putative dsDNA mimic protein family.

May act as a double-stranded DNA (dsDNA) mimic. Probably regulates the activity of a dsDNA-binding protein. The sequence is that of Putative double-stranded DNA mimic protein ETA_15890 from Erwinia tasmaniensis (strain DSM 17950 / CFBP 7177 / CIP 109463 / NCPPB 4357 / Et1/99).